We begin with the raw amino-acid sequence, 62 residues long: Photosystem II reaction center X protein (62 aa).

The helical transmembrane segment at Ile-26–Phe-46 threads the bilayer.

The protein belongs to the PsbX family. Type 2 subfamily. PSII consists of a core antenna complex that captures photons, and an electron transfer chain that converts photonic excitation into a charge separation. PSII forms dimeric complexes.

The protein localises to the cellular thylakoid membrane. Functionally, involved in the binding and/or turnover of quinones at the Q(B) site of Photosystem II. This Prochlorococcus marinus (strain MIT 9515) protein is Photosystem II reaction center X protein.